Here is a 293-residue protein sequence, read N- to C-terminus: Formamidopyrimidine-DNA glycosylase (293 aa).

Pro2 serves as the catalytic Schiff-base intermediate with DNA. The Proton donor role is filled by Glu3. The Proton donor; for beta-elimination activity role is filled by Lys58. His104, Arg123, and Lys166 together coordinate DNA. The segment at 257-293 adopts an FPG-type zinc-finger fold; the sequence is QVYDREGEPCRTDGCGGVVKRFVQNGRSTFWCPKCQR. Residue Arg283 is the Proton donor; for delta-elimination activity of the active site.

Belongs to the FPG family. In terms of assembly, monomer. It depends on Zn(2+) as a cofactor.

It carries out the reaction Hydrolysis of DNA containing ring-opened 7-methylguanine residues, releasing 2,6-diamino-4-hydroxy-5-(N-methyl)formamidopyrimidine.. The enzyme catalyses 2'-deoxyribonucleotide-(2'-deoxyribose 5'-phosphate)-2'-deoxyribonucleotide-DNA = a 3'-end 2'-deoxyribonucleotide-(2,3-dehydro-2,3-deoxyribose 5'-phosphate)-DNA + a 5'-end 5'-phospho-2'-deoxyribonucleoside-DNA + H(+). Functionally, involved in base excision repair of DNA damaged by oxidation or by mutagenic agents. Acts as a DNA glycosylase that recognizes and removes damaged bases. Has a preference for oxidized purines, such as 7,8-dihydro-8-oxoguanine (8-oxoG). Has AP (apurinic/apyrimidinic) lyase activity and introduces nicks in the DNA strand. Cleaves the DNA backbone by beta-delta elimination to generate a single-strand break at the site of the removed base with both 3'- and 5'-phosphates. The protein is Formamidopyrimidine-DNA glycosylase of Bradyrhizobium sp. (strain BTAi1 / ATCC BAA-1182).